A 375-amino-acid polypeptide reads, in one-letter code: Protein RIC-3 (375 aa).

An N-terminal signal peptide occupies residues 1–29 (MALSAVQKVVLFSCLVLCVSLLLPRAYIA). At 30 to 90 (RGKPAAQEGN…GGGGGTRPSL (61 aa)) the chain is on the lumenal side. Polar residues predominate over residues 38-47 (GNTGLFQSSG). The disordered stretch occupies residues 38–63 (GNTGLFQSSGHHPKPTDGRPGGAHFP). The chain crosses the membrane as a helical span at residues 91-111 (VGQIIPIYGFGILLYILYILF). At 112–375 (KLSSKGKSTK…RKRNTKGIEY (264 aa)) the chain is on the cytoplasmic side. Positions 135–165 (KRKITDYELSQLQDKLKETEEAMEKIISRLG) form a coiled coil. A disordered region spans residues 251–375 (SAEQVAEQMG…RKRNTKGIEY (125 aa)). The segment covering 286–296 (GDQQAQGTISA) has biased composition (polar residues). Acidic residues predominate over residues 305-319 (EDIEEDEDEDEDPEV). The segment covering 365–375 (LRKRNTKGIEY) has biased composition (basic residues).

It belongs to the ric-3 family.

It is found in the endoplasmic reticulum membrane. Functionally, molecular chaperone which facilitates proper subunit assembly andsurface trafficking of alpha-7 (CHRNA7) and alpha-8 (CHRNA8) nicotinic acetylcholine receptors. May also promote functional expression of homomeric serotoninergic 5-HT3 receptors, and of heteromeric acetylcholine receptors. The polypeptide is Protein RIC-3 (ric3) (Xenopus tropicalis (Western clawed frog)).